A 311-amino-acid polypeptide reads, in one-letter code: Methionyl-tRNA formyltransferase (311 aa).

117 to 120 (SLLP) serves as a coordination point for (6S)-5,6,7,8-tetrahydrofolate.

The protein belongs to the Fmt family.

The catalysed reaction is L-methionyl-tRNA(fMet) + (6R)-10-formyltetrahydrofolate = N-formyl-L-methionyl-tRNA(fMet) + (6S)-5,6,7,8-tetrahydrofolate + H(+). Functionally, attaches a formyl group to the free amino group of methionyl-tRNA(fMet). The formyl group appears to play a dual role in the initiator identity of N-formylmethionyl-tRNA by promoting its recognition by IF2 and preventing the misappropriation of this tRNA by the elongation apparatus. The polypeptide is Methionyl-tRNA formyltransferase (Bordetella avium (strain 197N)).